The chain runs to 231 residues: Triggering receptor expressed on myeloid cells 1 (231 aa).

Residues 1–20 (MRKTRLWGLLWMFFVSELLA) form the signal peptide. The Extracellular portion of the chain corresponds to 21-202 (ATKLTEEKYE…TDIIRVPVFN (182 aa)). The region spanning 26–131 (EEKYELKEGQ…LFDRIRLVVT (106 aa)) is the Ig-like V-type domain. Cys41 and Cys110 form a disulfide bridge. 2 stretches are compositionally biased toward polar residues: residues 134–157 (SSGT…TTTK) and 164–182 (TSPT…DVST). Positions 134–182 (SSGTPGSSENSTPNVYKTPPTTTKALRPLYTSPTTVTQAPPKSTADVST) are disordered. Residues Asn188 and Asn191 are each glycosylated (N-linked (GlcNAc...) asparagine). Residues 203 to 223 (IAILVAGGFLSKSLVFSVLFA) form a helical membrane-spanning segment. The Cytoplasmic portion of the chain corresponds to 224 to 231 (VTLRSFVP).

Monomer. Homomultimer; when activated. Interacts with TYROBP/DAP12. Interacts with TLR4.

It is found in the cell membrane. In terms of biological role, cell surface receptor that plays important roles in innate and adaptive immunity by amplifying inflammatory responses. Upon activation by various ligands such as PGLYRP1, HMGB1 or HSP70, multimerizes and forms a complex with transmembrane adapter TYROBP/DAP12. In turn, initiates a SYK-mediated cascade of tyrosine phosphorylation, activating multiple downstream mediators such as BTK, MAPK1, MAPK3 or phospholipase C-gamma. This cascade promotes the neutrophil- and macrophage-mediated release of pro-inflammatory cytokines and/or chemokines, as well as their migration and thereby amplifies inflammatory responses that are triggered by bacterial and fungal infections. By also promoting the amplification of inflammatory signals that are initially triggered by Toll-like receptor (TLR) and NOD-like receptor engagement, plays a major role in the pathophysiology of acute and chronic inflammatory diseases of different etiologies including septic shock and atherosclerosis. In Pongo abelii (Sumatran orangutan), this protein is Triggering receptor expressed on myeloid cells 1 (TREM1).